The chain runs to 362 residues: tRNA-specific 2-thiouridylase MnmA (362 aa).

Residues 13 to 20 (GLSGGVDS) and M39 each bind ATP. An interaction with target base in tRNA region spans residues 99 to 101 (NPD). The active-site Nucleophile is C104. C104 and C200 are disulfide-bonded. G128 is an ATP binding site. The segment at 150 to 152 (KDQ) is interaction with tRNA. The Cysteine persulfide intermediate role is filled by C200.

The protein belongs to the MnmA/TRMU family.

Its subcellular location is the cytoplasm. The enzyme catalyses S-sulfanyl-L-cysteinyl-[protein] + uridine(34) in tRNA + AH2 + ATP = 2-thiouridine(34) in tRNA + L-cysteinyl-[protein] + A + AMP + diphosphate + H(+). Catalyzes the 2-thiolation of uridine at the wobble position (U34) of tRNA, leading to the formation of s(2)U34. This Coxiella burnetii (strain RSA 493 / Nine Mile phase I) protein is tRNA-specific 2-thiouridylase MnmA.